The chain runs to 22 residues: RGCCNGRGGCSSRWCRDHARCC.

Disulfide bonds link C3–C15, C4–C21, and C10–C22. C22 is modified (cysteine amide).

Belongs to the conotoxin M superfamily. As to expression, expressed by the venom duct.

The protein localises to the secreted. In terms of biological role, mu-conotoxins block voltage-gated sodium channels (Nav). This toxin potently inhibits hNav1.4/SCN4A (IC(50)=15.11 nM). It also displays lower activities on other human subtypes (Nav1.1/SCN1A; IC(50)=132 nM, Nav1.2/SCN2A; IC(50)=363.8, Nav1.3/SCN3A; IC(50)=89.4, Nav1.6/SCN3A; IC(50)=124.9, Nav1.7/SCN7A; IC(50)=152.2). At Nav1.7/SCN9A, it does not elicit change in channel voltage-dependence of fast inactivation or activation, suggesting it acts as a pore blocker. Interestingly, it blocks current inhibition in an irreversible manner (tested during 35 minutes). The polypeptide is Mu-conotoxin SxIIIC (Conus striolatus (Cone snail)).